The sequence spans 313 residues: Probable 5-dehydro-4-deoxyglucarate dehydratase 1 (313 aa).

It belongs to the DapA family.

It catalyses the reaction 5-dehydro-4-deoxy-D-glucarate + H(+) = 2,5-dioxopentanoate + CO2 + H2O. It functions in the pathway carbohydrate acid metabolism; D-glucarate degradation; 2,5-dioxopentanoate from D-glucarate: step 2/2. The polypeptide is Probable 5-dehydro-4-deoxyglucarate dehydratase 1 (Streptomyces avermitilis (strain ATCC 31267 / DSM 46492 / JCM 5070 / NBRC 14893 / NCIMB 12804 / NRRL 8165 / MA-4680)).